Consider the following 151-residue polypeptide: Group 10 secretory phospholipase A2 (151 aa).

An N-terminal signal peptide occupies residues M1 to S17. The propeptide occupies E18–R28. 8 cysteine pairs are disulfide-bonded: C39-C97, C53-C143, C55-C71, C70-C125, C76-C150, C77-C118, C86-C111, and C104-C116. Ca(2+)-binding residues include Y54, G56, and G58. H74 is an active-site residue. A Ca(2+)-binding site is contributed by D75. Residue D119 is part of the active site.

This sequence belongs to the phospholipase A2 family. In terms of assembly, interacts with PLA2R1; this interaction mediates PLA2G10 clearance and inactivation. Requires Ca(2+) as cofactor.

It is found in the secreted. The protein localises to the lysosome. It localises to the cytoplasmic vesicle. The protein resides in the secretory vesicle. Its subcellular location is the acrosome. The enzyme catalyses a 1,2-diacyl-sn-glycero-3-phosphocholine + H2O = a 1-acyl-sn-glycero-3-phosphocholine + a fatty acid + H(+). It catalyses the reaction 1-hexadecanoyl-2-(9Z-octadecenoyl)-sn-glycero-3-phosphocholine + H2O = 1-hexadecanoyl-sn-glycero-3-phosphocholine + (9Z)-octadecenoate + H(+). The catalysed reaction is 1-octadecanoyl-2-(5Z,8Z,11Z,14Z-eicosatetraenoyl)-sn-glycero-3-phosphocholine + H2O = 1-octadecanoyl-sn-glycero-3-phosphocholine + (5Z,8Z,11Z,14Z)-eicosatetraenoate + H(+). It carries out the reaction 1,2-dihexadecanoyl-sn-glycero-3-phosphocholine + H2O = 1-hexadecanoyl-sn-glycero-3-phosphocholine + hexadecanoate + H(+). The enzyme catalyses 1-hexadecanoyl-2-(9Z-octadecenoyl)-sn-glycero-3-phosphoglycerol + H2O = 1-hexadecanoyl-sn-glycero-3-phosphoglycerol + (9Z)-octadecenoate + H(+). It catalyses the reaction 1,2-dihexadecanoyl-sn-glycero-3-phospho-(1'-sn-glycerol) + H2O = 1-hexadecanoyl-sn-glycero-3-phospho-(1'-sn-glycerol) + hexadecanoate + H(+). The catalysed reaction is 1-hexadecanoyl-2-(9Z-octadecenoyl)-sn-glycero-3-phospho-L-serine + H2O = 1-hexadecanoyl-sn-glycero-3-phospho-L-serine + (9Z)-octadecenoate + H(+). It carries out the reaction 1-hexadecanoyl-2-(9Z,12Z-octadecadienoyl)-sn-glycero-3-phosphoethanolamine + H2O = 1-hexadecanoyl-sn-glycero-3-phosphoethanolamine + (9Z,12Z)-octadecadienoate + H(+). The enzyme catalyses 1-hexadecanoyl-2-(9Z-octadecenoyl)-sn-glycero-3-phosphate + H2O = 1-hexadecanoyl-sn-glycero-3-phosphate + (9Z)-octadecenoate + H(+). It catalyses the reaction 1-O-hexadecyl-2-acetyl-sn-glycero-3-phosphocholine + H2O = 1-O-hexadecyl-sn-glycero-3-phosphocholine + acetate + H(+). In terms of biological role, secretory calcium-dependent phospholipase A2 that primarily targets extracellular phospholipids. Hydrolyzes the ester bond of the fatty acyl group attached at sn-2 position of phospholipids with preference for phosphatidylcholines and phosphatidylglycerols over phosphatidylethanolamines. Preferentially releases sn-2 omega-6 and omega-3 polyunsaturated fatty acyl (PUFA) chains over saturated fatty acyls. Contributes to phospholipid remodeling of very low-density lipoprotein (VLDL), low-density lipoprotein (LDL) and high-density lipoprotein (HDL) particles. Hydrolyzes LDL phospholipids releasing unsaturated fatty acids that regulate macrophage differentiation toward foam cells. Efficiently hydrolyzes and inactivates platelet activating factor (PAF), a potent lipid mediator present in oxidized LDL. May act in an autocrine and paracrine manner. Secreted by lung epithelium, targets membrane phospholipids of infiltrating eosinophils, releasing arachidonate and boosting eicosanoid and cysteinyl leukotriene synthesis involved in airway inflammatory response. Secreted by gut epithelium, hydrolyzes dietary and biliary phosphatidylcholines in the gastrointestinal lumen. Plays a stem cell regulator role in colon epithelium. Within intracellular compartment, mediates Paneth-like cell differentiation and its stem cell supporting functions by inhibiting the Wnt signaling pathway in intestinal stem cell (ISC). Secreted in the intestinal lumen upon inflammation, acts in an autocrine way and promotes prostaglandin E2 synthesis that stimulates Wnt signaling pathway in ISCs and tissue regeneration. May participate in hair follicle morphogenesis by regulating phosphatidylethanolamines metabolism at the outermost epithelial layer and facilitating melanin synthesis. By releasing lysophosphatidylcholines (LPCs) at sperm acrosome, controls sperm cell capacitation, acrosome reaction and overall fertility. May promote neurite outgrowth in neuron fibers involved in nociception. Contributes to lipid remodeling of cellular membranes and generation of lipid mediators involved in pathogen clearance. Cleaves sn-2 fatty acyl chains of phosphatidylglycerols and phosphatidylethanolamines, which are major components of membrane phospholipids in bacteria. Displays bactericidal activity against Gram-positive bacteria by directly hydrolyzing phospholipids of the bacterial membrane. In pulmonary epithelium, may contribute to host defense response against adenoviral infection. Prevents adenovirus entry into host cells by hydrolyzing host cell plasma membrane, releasing C16:0 LPCs that inhibit virus-mediated membrane fusion and viral infection. Likely prevents adenoviral entry into the endosomes of host cells. May play a role in maturation and activation of innate immune cells including macrophages, group 2 innate lymphoid cells and mast cells. The protein is Group 10 secretory phospholipase A2 (Pla2g10) of Rattus norvegicus (Rat).